Consider the following 81-residue polypeptide: Accessory gland protein Acp63F (81 aa).

Residues 1–16 form the signal peptide; it reads MKAIIVFILFISSVHA.

In terms of tissue distribution, main cells of accessory gland and seminal fluid.

Its subcellular location is the secreted. Responsible for physiological and behavioral changes in mated female flies. The chain is Accessory gland protein Acp63F (Acp63F) from Drosophila melanogaster (Fruit fly).